Here is a 202-residue protein sequence, read N- to C-terminus: Na(+)-translocating NADH-quinone reductase subunit E (202 aa).

A run of 6 helical transmembrane segments spans residues 11–31, 35–55, 81–101, 114–134, 144–164, and 180–200; these read AVFI…FLAV, VTTS…SVPV, FLRF…LEMA, GIFL…SFMV, VVYG…LAGI, and LGIT…FSGI.

It belongs to the NqrDE/RnfAE family. In terms of assembly, composed of six subunits; NqrA, NqrB, NqrC, NqrD, NqrE and NqrF.

Its subcellular location is the cell inner membrane. The enzyme catalyses a ubiquinone + n Na(+)(in) + NADH + H(+) = a ubiquinol + n Na(+)(out) + NAD(+). Its function is as follows. NQR complex catalyzes the reduction of ubiquinone-1 to ubiquinol by two successive reactions, coupled with the transport of Na(+) ions from the cytoplasm to the periplasm. NqrA to NqrE are probably involved in the second step, the conversion of ubisemiquinone to ubiquinol. This chain is Na(+)-translocating NADH-quinone reductase subunit E, found in Pseudoalteromonas translucida (strain TAC 125).